A 280-amino-acid polypeptide reads, in one-letter code: Ribosomal RNA-processing protein 7 homolog A (280 aa).

The region spanning 59–159 (RTLFVLNVPP…TGIHKWISDY (101 aa)) is the RRM domain. Ser99 bears the Phosphoserine mark.

It belongs to the RRP7 family. As to quaternary structure, part of the small subunit (SSU) processome, composed of more than 70 proteins and the RNA chaperone small nucleolar RNA (snoRNA) U3. Interacts with NOL6; required for NOL6 localization to nucleolus.

It is found in the nucleus. It localises to the nucleolus. The protein resides in the cell projection. Its subcellular location is the cilium. The protein localises to the cytoplasm. It is found in the cytoskeleton. It localises to the microtubule organizing center. The protein resides in the centrosome. In terms of biological role, nucleolar protein that is involved in ribosomal RNA (rRNA) processing. Also plays a role in primary cilia resorption, and cell cycle progression in neurogenesis and neocortex development. Part of the small subunit (SSU) processome, first precursor of the small eukaryotic ribosomal subunit. During the assembly of the SSU processome in the nucleolus, many ribosome biogenesis factors, an RNA chaperone and ribosomal proteins associate with the nascent pre-rRNA and work in concert to generate RNA folding, modifications, rearrangements and cleavage as well as targeted degradation of pre-ribosomal RNA by the RNA exosome. This Pongo abelii (Sumatran orangutan) protein is Ribosomal RNA-processing protein 7 homolog A (RRP7A).